The chain runs to 953 residues: Lysosomal alpha-glucosidase (953 aa).

The N-terminal stretch at 1-27 (MNIRKPLCSNSVVGACTLISLTTAVIL) is a signal peptide. The propeptide occupies 28–69 (GHLMLRELMLLPQDLHESSSGLWKTYRPHHQEGYKPGPLHIQ). Residues 80 to 131 (TQCDVPPSSRFDCAPDKGISQEQCEARGCCYVPAGQVLKEPQIGQPWCFFPP) enclose the P-type domain. 3 disulfide bridges follow: cysteine 82/cysteine 109, cysteine 92/cysteine 108, and cysteine 103/cysteine 127. N-linked (GlcNAc...) asparagine glycosylation is found at asparagine 140, asparagine 233, and asparagine 390. Residue aspartate 404 coordinates substrate. An N-linked (GlcNAc...) asparagine glycan is attached at asparagine 470. Aspartate 518 functions as the Nucleophile in the catalytic mechanism. Glutamate 521 is an active-site residue. The cysteines at positions 533 and 558 are disulfide-linked. Residues arginine 600 and aspartate 616 each coordinate substrate. Residues cysteine 647 and cysteine 658 are joined by a disulfide bond. Substrate is bound at residue histidine 674. Asparagine 883, asparagine 926, and asparagine 933 each carry an N-linked (GlcNAc...) asparagine glycan.

It belongs to the glycosyl hydrolase 31 family.

The protein resides in the lysosome. It is found in the lysosome membrane. It catalyses the reaction Hydrolysis of terminal, non-reducing (1-&gt;4)-linked alpha-D-glucose residues with release of alpha-D-glucose.. In terms of biological role, essential for the degradation of glycogen in lysosomes. Has highest activity on alpha-1,4-linked glycosidic linkages, but can also hydrolyze alpha-1,6-linked glucans. This chain is Lysosomal alpha-glucosidase (Gaa), found in Mus musculus (Mouse).